We begin with the raw amino-acid sequence, 275 residues long: Diaminopimelate epimerase (275 aa).

Substrate contacts are provided by N12, Q45, and N65. The Proton donor role is filled by C74. Residues 75–76 (GN), N158, N191, and 209–210 (ER) contribute to the substrate site. Residue C218 is the Proton acceptor of the active site. 219–220 (GT) provides a ligand contact to substrate.

The protein belongs to the diaminopimelate epimerase family. In terms of assembly, homodimer.

The protein resides in the cytoplasm. It carries out the reaction (2S,6S)-2,6-diaminopimelate = meso-2,6-diaminopimelate. It participates in amino-acid biosynthesis; L-lysine biosynthesis via DAP pathway; DL-2,6-diaminopimelate from LL-2,6-diaminopimelate: step 1/1. In terms of biological role, catalyzes the stereoinversion of LL-2,6-diaminopimelate (L,L-DAP) to meso-diaminopimelate (meso-DAP), a precursor of L-lysine and an essential component of the bacterial peptidoglycan. The sequence is that of Diaminopimelate epimerase from Shewanella sp. (strain MR-4).